A 224-amino-acid chain; its full sequence is Cytidylate kinase (224 aa).

Residue 9–17 (GPSGVGKGT) participates in ATP binding.

This sequence belongs to the cytidylate kinase family. Type 1 subfamily.

The protein localises to the cytoplasm. It carries out the reaction CMP + ATP = CDP + ADP. The enzyme catalyses dCMP + ATP = dCDP + ADP. The protein is Cytidylate kinase of Dichelobacter nodosus (strain VCS1703A).